Reading from the N-terminus, the 877-residue chain is Transcriptional corepressor SEUSS (877 aa).

Disordered stretches follow at residues 1–42 (MVPS…VSPR) and 272–295 (LKSM…PLRP). Positions 272 to 292 (LKSMPQQRPQLPQQFQQQNLP) are enriched in low complexity. The dimerization stretch occupies residues 321–563 (PEDNNIEFWR…ETRTGPIESL (243 aa)). The Nuclear localization signal motif lies at 330–344 (RKFVAEYFAPNAKKR). Disordered stretches follow at residues 560–599 (IESL…QQQQ), 612–633 (QQTV…LMQG), and 666–753 (GRHQ…NESS). The stretch at 582 to 618 (QQASDQLRQQQQQQQQQQQQQQQQQQQQQQQQTVSQN) forms a coiled coil. The segment covering 590–599 (QQQQQQQQQQ) has biased composition (low complexity). A compositionally biased stretch (polar residues) spans 614 to 633 (TVSQNTNSDQSSRQVALMQG). Composition is skewed to low complexity over residues 688-703 (QSPS…SSQQ) and 711-725 (QSPT…PSQN). Residues 726 to 741 (GIPSVNHMGSTNSPAM) are compositionally biased toward polar residues.

It belongs to the adn1/SEU family. In terms of assembly, forms a corepressor complex with LUG; LUG is the transcription repressor subunit and SEU the specific DNA-binding adapter. Interacts with AGL24-AP1 and SVP-AP1 dimers when complexed to SEU. Interacts with AP1/AGL7 and SEP3/AGL9. Binds to LUH. Expressed in root, leaves, seedlings, vegetative and reproductive shoot apical meristems, seeds, floral meristems and all floral organs.

Its subcellular location is the nucleus. It localises to the nucleoplasm. DNA-binding adapter subunit of the SEU-LUG transcriptional corepressor of the C class floral homeotic gene AGAMOUS during the early stages of floral meristem development. Is part of the A class cadastral complex that define the boundaries between the A and C class homeotic genes expression and function. Interacts together with APETALA2 and LEUNIG to repress AGAMOUS expression. In association with LUG, regulates petal shape through AGAMOUS-independent mechanisms. Controls cell division during petal development and enable the proper patterning of petal blade vasculature. Required for the proper elaboration of petal polarity along the adaxial/abaxial axis. May act through direct or indirect regulation of PHABULOSA and YAB1 and thus regulate cellular proliferation within the developing petal blade. In association with AINTEGUMENTA (ANT), coordinates patterning cues and cellular proliferation along the three positional axes of the developing gynoecium. Required for the development of the medial ridge and subsequent ovule initiation. The chain is Transcriptional corepressor SEUSS (SEU) from Arabidopsis thaliana (Mouse-ear cress).